Here is a 25-residue protein sequence, read N- to C-terminus: Antimicrobial peptide 3 (25 aa).

As to expression, skin.

The protein resides in the secreted. In terms of biological role, has antibacterial activity against Gram-positive bacterium S.aureus and Gram-negative bacterium E.coli, when in combination with XT1 and XT6. The chain is Antimicrobial peptide 3 from Xenopus tropicalis (Western clawed frog).